We begin with the raw amino-acid sequence, 142 residues long: Transcription antitermination protein NusB (142 aa).

It belongs to the NusB family.

In terms of biological role, involved in transcription antitermination. Required for transcription of ribosomal RNA (rRNA) genes. Binds specifically to the boxA antiterminator sequence of the ribosomal RNA (rrn) operons. The polypeptide is Transcription antitermination protein NusB (Actinobacillus succinogenes (strain ATCC 55618 / DSM 22257 / CCUG 43843 / 130Z)).